Reading from the N-terminus, the 181-residue chain is Large ribosomal subunit protein uL5 (181 aa).

It belongs to the universal ribosomal protein uL5 family. As to quaternary structure, part of the 50S ribosomal subunit; part of the 5S rRNA/L5/L18/L25 subcomplex. Contacts the 5S rRNA and the P site tRNA. Forms a bridge to the 30S subunit in the 70S ribosome.

Its function is as follows. This is one of the proteins that bind and probably mediate the attachment of the 5S RNA into the large ribosomal subunit, where it forms part of the central protuberance. In the 70S ribosome it contacts protein S13 of the 30S subunit (bridge B1b), connecting the 2 subunits; this bridge is implicated in subunit movement. Contacts the P site tRNA; the 5S rRNA and some of its associated proteins might help stabilize positioning of ribosome-bound tRNAs. The chain is Large ribosomal subunit protein uL5 from Trichodesmium erythraeum (strain IMS101).